A 313-amino-acid chain; its full sequence is Glyoxylate/hydroxypyruvate reductase A (313 aa).

Arg228 is an active-site residue. Catalysis depends on His276, which acts as the Proton donor.

The protein belongs to the D-isomer specific 2-hydroxyacid dehydrogenase family. GhrA subfamily.

The protein localises to the cytoplasm. It carries out the reaction glycolate + NADP(+) = glyoxylate + NADPH + H(+). The enzyme catalyses (R)-glycerate + NAD(+) = 3-hydroxypyruvate + NADH + H(+). The catalysed reaction is (R)-glycerate + NADP(+) = 3-hydroxypyruvate + NADPH + H(+). Functionally, catalyzes the NADPH-dependent reduction of glyoxylate and hydroxypyruvate into glycolate and glycerate, respectively. This chain is Glyoxylate/hydroxypyruvate reductase A, found in Yersinia enterocolitica serotype O:8 / biotype 1B (strain NCTC 13174 / 8081).